Here is a 188-residue protein sequence, read N- to C-terminus: Putative manganese efflux pump MntP (188 aa).

Transmembrane regions (helical) follow at residues 3-23 (WLTI…VALA), 39-59 (LGFH…LLGM), 65-85 (ISAY…GRMV), 104-124 (GMTM…VGLS), 125-145 (IAML…VAGV), and 167-187 (ICGG…HTLL).

It belongs to the MntP (TC 9.B.29) family.

The protein localises to the cell inner membrane. Probably functions as a manganese efflux pump. This is Putative manganese efflux pump MntP from Citrifermentans bemidjiense (strain ATCC BAA-1014 / DSM 16622 / JCM 12645 / Bem) (Geobacter bemidjiensis).